Reading from the N-terminus, the 469-residue chain is GDP-fucose protein O-fucosyltransferase 3 (469 aa).

The Cytoplasmic segment spans residues 1–9; sequence MVNRIWEKR. The chain crosses the membrane as a helical; Signal-anchor for type II membrane protein span at residues 10–30; sequence FWISCFFIIFLFILVIFQVMV. The Lumenal segment spans residues 31–469; sequence ELGRFEKKET…EFWNLVFKFW (439 aa). 4 N-linked (GlcNAc...) asparagine glycosylation sites follow: Asn-100, Asn-158, Asn-308, and Asn-333. Cys-379 and Cys-382 are oxidised to a cystine. The N-linked (GlcNAc...) asparagine glycan is linked to Asn-455.

It belongs to the glycosyltransferase 10 family.

The protein resides in the endoplasmic reticulum membrane. It catalyses the reaction L-threonyl-[protein] + GDP-beta-L-fucose = 3-O-(alpha-L-fucosyl)-L-threonyl-[protein] + GDP + H(+). The catalysed reaction is L-seryl-[protein] + GDP-beta-L-fucose = 3-O-(alpha-L-fucosyl)-L-seryl-[protein] + GDP + H(+). It functions in the pathway protein modification; protein glycosylation. In terms of biological role, protein O-fucosyltransferase that specifically catalyzes O-fucosylation of serine or threonine residues in EMI domains of target proteins. Attaches fucose through an O-glycosidic linkage. O-fucosylation of EMI domain-containing proteins may be required for facilitating protein folding and secretion. This chain is GDP-fucose protein O-fucosyltransferase 3 (fut10), found in Xenopus laevis (African clawed frog).